We begin with the raw amino-acid sequence, 229 residues long: 5'-methylthioadenosine/S-adenosylhomocysteine nucleosidase (229 aa).

Residue Glu-12 is the Proton acceptor of the active site. Substrate contacts are provided by residues Gly-78, Ile-152, and Met-173–Glu-174. Catalysis depends on Asp-197, which acts as the Proton donor.

It belongs to the PNP/UDP phosphorylase family. MtnN subfamily.

It catalyses the reaction S-adenosyl-L-homocysteine + H2O = S-(5-deoxy-D-ribos-5-yl)-L-homocysteine + adenine. It carries out the reaction S-methyl-5'-thioadenosine + H2O = 5-(methylsulfanyl)-D-ribose + adenine. The catalysed reaction is 5'-deoxyadenosine + H2O = 5-deoxy-D-ribose + adenine. It functions in the pathway amino-acid biosynthesis; L-methionine biosynthesis via salvage pathway; S-methyl-5-thio-alpha-D-ribose 1-phosphate from S-methyl-5'-thioadenosine (hydrolase route): step 1/2. Its function is as follows. Catalyzes the irreversible cleavage of the glycosidic bond in both 5'-methylthioadenosine (MTA) and S-adenosylhomocysteine (SAH/AdoHcy) to adenine and the corresponding thioribose, 5'-methylthioribose and S-ribosylhomocysteine, respectively. Also cleaves 5'-deoxyadenosine, a toxic by-product of radical S-adenosylmethionine (SAM) enzymes, into 5-deoxyribose and adenine. The chain is 5'-methylthioadenosine/S-adenosylhomocysteine nucleosidase from Baumannia cicadellinicola subsp. Homalodisca coagulata.